A 147-amino-acid chain; its full sequence is Hemoglobin subunit delta (147 aa).

A Globin domain is found at 3 to 147 (HLTPDEKNAV…VATALAHKYH (145 aa)). Residue Ser-51 is modified to Phosphoserine. 2 residues coordinate heme b: His-64 and His-93.

This sequence belongs to the globin family. In terms of assembly, heterotetramer of two delta chains and two alpha chains. In terms of tissue distribution, red blood cells.

The sequence is that of Hemoglobin subunit delta (HBD) from Otolemur crassicaudatus (Brown greater galago).